Here is a 325-residue protein sequence, read N- to C-terminus: Peroxidase 47 (325 aa).

A signal peptide spans 1–36 (MLTRFKKQNNKMVRANIVSMVLLMHAIVGFPFHARG). Disulfide bonds link Cys-46–Cys-125, Cys-79–Cys-84, Cys-131–Cys-321, and Cys-209–Cys-235. His-77 (proton acceptor) is an active-site residue. Ca(2+) contacts are provided by Asp-78, Gly-83, Asp-85, and Ser-87. Pro-172 contacts substrate. A glycan (N-linked (GlcNAc...) asparagine) is linked at Asn-177. Position 202 (His-202) interacts with heme b. Thr-203 is a binding site for Ca(2+). Ca(2+)-binding residues include Asp-246, Thr-248, and Asp-253.

This sequence belongs to the peroxidase family. Classical plant (class III) peroxidase subfamily. Requires heme b as cofactor. It depends on Ca(2+) as a cofactor.

It is found in the secreted. The catalysed reaction is 2 a phenolic donor + H2O2 = 2 a phenolic radical donor + 2 H2O. Functionally, removal of H(2)O(2), oxidation of toxic reductants, biosynthesis and degradation of lignin, suberization, auxin catabolism, response to environmental stresses such as wounding, pathogen attack and oxidative stress. These functions might be dependent on each isozyme/isoform in each plant tissue. This Arabidopsis thaliana (Mouse-ear cress) protein is Peroxidase 47 (PER47).